A 310-amino-acid polypeptide reads, in one-letter code: NAD-dependent protein deacylase sirtuin-5, mitochondrial (310 aa).

A mitochondrion-targeting transit peptide spans 1–36; it reads MQPLQIAPCRLLYGLYRGLKSPASTGTRICPAMARP. One can recognise a Deacetylase sirtuin-type domain in the interval 37–307; it reads SSNMADFRKL…PEALAPHETG (271 aa). 58–77 provides a ligand contact to NAD(+); that stretch reads GAGVSAESGVPTFRGAGGYW. Residues tyrosine 102 and arginine 105 each contribute to the substrate site. 140-143 contacts NAD(+); the sequence is QNID. Residue histidine 158 is the Proton acceptor of the active site. 4 residues coordinate Zn(2+): cysteine 166, cysteine 169, cysteine 207, and cysteine 212. NAD(+) is bound by residues 249–251, 275–277, and cysteine 293; these read GTS and NME.

The protein belongs to the sirtuin family. Class III subfamily. Monomer. Homodimer. Interacts with CPS1. Interacts with PCCA. It depends on Zn(2+) as a cofactor.

It localises to the mitochondrion. The protein resides in the cytoplasm. It is found in the cytosol. Its subcellular location is the nucleus. The enzyme catalyses N(6)-malonyl-L-lysyl-[protein] + NAD(+) + H2O = 2''-O-malonyl-ADP-D-ribose + nicotinamide + L-lysyl-[protein]. The catalysed reaction is N(6)-succinyl-L-lysyl-[protein] + NAD(+) + H2O = 2''-O-succinyl-ADP-D-ribose + nicotinamide + L-lysyl-[protein]. It catalyses the reaction N(6)-glutaryl-L-lysyl-[protein] + NAD(+) + H2O = 2''-O-glutaryl-ADP-D-ribose + nicotinamide + L-lysyl-[protein]. In terms of biological role, NAD-dependent lysine demalonylase, desuccinylase and deglutarylase that specifically removes malonyl, succinyl and glutaryl groups on target proteins. Activates CPS1 and contributes to the regulation of blood ammonia levels during prolonged fasting: acts by mediating desuccinylation and deglutarylation of CPS1, thereby increasing CPS1 activity in response to elevated NAD levels during fasting. Activates SOD1 by mediating its desuccinylation, leading to reduced reactive oxygen species. Activates SHMT2 by mediating its desuccinylation. Modulates ketogenesis through the desuccinylation and activation of HMGCS2. Has weak NAD-dependent protein deacetylase activity; however this activity may not be physiologically relevant in vivo. Can deacetylate cytochrome c (CYCS) and a number of other proteins in vitro such as UOX. The chain is NAD-dependent protein deacylase sirtuin-5, mitochondrial from Canis lupus familiaris (Dog).